The primary structure comprises 359 residues: Peptide chain release factor 1 (359 aa).

The residue at position 235 (Q235) is an N5-methylglutamine.

It belongs to the prokaryotic/mitochondrial release factor family. In terms of processing, methylated by PrmC. Methylation increases the termination efficiency of RF1.

Its subcellular location is the cytoplasm. Functionally, peptide chain release factor 1 directs the termination of translation in response to the peptide chain termination codons UAG and UAA. This chain is Peptide chain release factor 1, found in Chelativorans sp. (strain BNC1).